Consider the following 148-residue polypeptide: Holo-[acyl-carrier-protein] synthase (148 aa).

Mg(2+) contacts are provided by Asp-9 and Glu-63.

It belongs to the P-Pant transferase superfamily. AcpS family. The cofactor is Mg(2+).

The protein resides in the cytoplasm. It catalyses the reaction apo-[ACP] + CoA = holo-[ACP] + adenosine 3',5'-bisphosphate + H(+). Transfers the 4'-phosphopantetheine moiety from coenzyme A to a Ser of acyl-carrier-protein. The protein is Holo-[acyl-carrier-protein] synthase of Burkholderia cenocepacia (strain HI2424).